The primary structure comprises 259 residues: Acetylglutamate kinase (259 aa).

Substrate is bound by residues 45–46 (GG), Arg67, and Asn159.

The protein belongs to the acetylglutamate kinase family. ArgB subfamily.

Its subcellular location is the cytoplasm. The enzyme catalyses N-acetyl-L-glutamate + ATP = N-acetyl-L-glutamyl 5-phosphate + ADP. It functions in the pathway amino-acid biosynthesis; L-arginine biosynthesis; N(2)-acetyl-L-ornithine from L-glutamate: step 2/4. In terms of biological role, catalyzes the ATP-dependent phosphorylation of N-acetyl-L-glutamate. The sequence is that of Acetylglutamate kinase from Aeromonas hydrophila subsp. hydrophila (strain ATCC 7966 / DSM 30187 / BCRC 13018 / CCUG 14551 / JCM 1027 / KCTC 2358 / NCIMB 9240 / NCTC 8049).